The chain runs to 312 residues: Putative ring-cleaving dioxygenase MhqO (312 aa).

2 consecutive VOC domains span residues 7 to 131 (GIHH…IVER) and 152 to 269 (GFGG…IATD). Residues H10, H217, and E265 each contribute to the Fe cation site.

The protein belongs to the extradiol ring-cleavage dioxygenase family. Fe(2+) serves as cofactor.

The protein localises to the cytoplasm. Its function is as follows. Putative ring-cleavage dioxygenase that may contribute to the degradation of aromatic compounds. The sequence is that of Putative ring-cleaving dioxygenase MhqO (mhqO) from Bacillus subtilis (strain 168).